Reading from the N-terminus, the 107-residue chain is Bombesin (107 aa).

Positions 1-26 (MSAIPLNRILPLGFLLIFSFISLSSC) are cleaved as a signal peptide. The propeptide occupies 27 to 41 (MEFVEDPNNQGGLNL). Residue glutamine 42 is modified to Pyrrolidone carboxylic acid. At methionine 55 the chain carries Methionine amide. Positions 56 to 107 (GKKSLQDTDFEEMESFAKRNVENMKAESERELRHAQLVVRNILEQYLKNMQN) are excised as a propeptide.

In terms of tissue distribution, expressed by the skin glands.

The protein resides in the secreted. In terms of biological role, stimulates smooth muscle contraction. Role in induction of hypothermia, stimulation of DNA replication and release of many gastrointestinal hormones. Possesses insulin-releasing activity. The protein is Bombesin of Bombina variegata (Yellow-bellied toad).